We begin with the raw amino-acid sequence, 440 residues long: Protein disulfide-isomerase 2-3 (440 aa).

A signal peptide spans 1-24; it reads MYKSPLTLLTLLTICFGFFDLSSA. Thioredoxin domains follow at residues 25–136 and 154–269; these read LYGS…KQIK and SKEK…ELVE. Residues cysteine 60 and cysteine 63 each act as nucleophile in the active site. Cysteine 60 and cysteine 63 are joined by a disulfide. Residues 143 to 163 form a disordered region; that stretch reads LEGKSKPTGGGSKEKKSEPSA. An N-linked (GlcNAc...) asparagine glycan is attached at asparagine 168. Active-site nucleophile residues include cysteine 192 and cysteine 195. Cysteines 192 and 195 form a disulfide. The short motif at 437–440 is the Prevents secretion from ER element; that stretch reads KDEL.

Belongs to the protein disulfide isomerase family. Widely expressed.

It localises to the endoplasmic reticulum lumen. The catalysed reaction is Catalyzes the rearrangement of -S-S- bonds in proteins.. Its function is as follows. Acts as a protein-folding catalyst that interacts with nascent polypeptides to catalyze the formation, isomerization, and reduction or oxidation of disulfide bonds. This is Protein disulfide-isomerase 2-3 (PDIL2-3) from Arabidopsis thaliana (Mouse-ear cress).